The following is a 264-amino-acid chain: Thymidylate synthase 2 (264 aa).

Arg-21 contacts dUMP. His-51 is a binding site for (6R)-5,10-methylene-5,6,7,8-tetrahydrofolate. 126-127 (RR) contacts dUMP. Cys-146 serves as the catalytic Nucleophile. DUMP is bound by residues 166-169 (RSAD), Asn-177, and 207-209 (HIY). Asp-169 lines the (6R)-5,10-methylene-5,6,7,8-tetrahydrofolate pocket. Residue Ser-263 participates in (6R)-5,10-methylene-5,6,7,8-tetrahydrofolate binding.

It belongs to the thymidylate synthase family. Bacterial-type ThyA subfamily. As to quaternary structure, homodimer.

It localises to the cytoplasm. The enzyme catalyses dUMP + (6R)-5,10-methylene-5,6,7,8-tetrahydrofolate = 7,8-dihydrofolate + dTMP. Its pathway is pyrimidine metabolism; dTTP biosynthesis. Catalyzes the reductive methylation of 2'-deoxyuridine-5'-monophosphate (dUMP) to 2'-deoxythymidine-5'-monophosphate (dTMP) while utilizing 5,10-methylenetetrahydrofolate (mTHF) as the methyl donor and reductant in the reaction, yielding dihydrofolate (DHF) as a by-product. This enzymatic reaction provides an intracellular de novo source of dTMP, an essential precursor for DNA biosynthesis. The polypeptide is Thymidylate synthase 2 (Bacillus amyloliquefaciens (Bacillus velezensis)).